A 332-amino-acid polypeptide reads, in one-letter code: Aquaporin-7-1 (332 aa).

The Cytoplasmic segment spans residues 1-66 (MSGQHQITEQ…RHAIRMPMAE (66 aa)). A helical transmembrane segment spans residues 67–87 (FFGVALLIIFGAGSACQVVLS). The Extracellular portion of the chain corresponds to 88-100 (TNPNVASSDRGSF). A helical transmembrane segment spans residues 101–121 (LSINLGWAIGIAMGAWVSGGI). Topologically, residues 122-144 (SGGHINPAITIAMATYRGFPWRR) are cytoplasmic. Positions 127-129 (NPA) match the NPA 1 motif. A helical membrane pass occupies residues 145-165 (VPSYIFAQVLGGVVGAALVYA). Residues 166–199 (NYIHAIDIFEGGRHVRTQATASLFATYALPYMTQ) lie on the Extracellular side of the membrane. A helical transmembrane segment spans residues 200-220 (VSCFFSEFLATAVLSMMVLAL). Over 221–230 (TDNRNGAPTN) the chain is Cytoplasmic. The chain crosses the membrane as a helical span at residues 231-251 (GLLPFALFVLFIGLGASLGME). The Extracellular portion of the chain corresponds to 252 to 283 (TAYALNPARDFGPRLFLAMSGYGKALFNYRSQ). Positions 257 to 259 (NPA) match the NPA 2 motif. A helical membrane pass occupies residues 284-304 (YWLWAPIIAPVLGAQAGGLLY). Over 305-332 (DTFLYDGDNSPIKWRRASSQECQLAEVV) the chain is Cytoplasmic.

Belongs to the MIP/aquaporin (TC 1.A.8) family.

The protein localises to the membrane. The catalysed reaction is H2O(in) = H2O(out). Water channel required to facilitate the transport of water across membranes. Does not mediate the transport carbon dioxide across the membrane. This Laccaria bicolor (Bicoloured deceiver) protein is Aquaporin-7-1.